A 473-amino-acid chain; its full sequence is Mitochondrial adenyl nucleotide antiporter SLC25A24-B (473 aa).

The segment at 1-173 (MLEQVQKFLL…RYWKHSTVLD (173 aa)) is regulatory N-terminal domain. Residues 1–197 (MLEQVQKFLL…EKKTGQWWKQ (197 aa)) lie on the Mitochondrial intermembrane side of the membrane. 4 consecutive EF-hand domains span residues 19–54 (DSQS…MGME), 55–88 (VGKG…EEHE), 86–121 (EHEK…LGIK), and 122–157 (ISLD…NPAD). Ca(2+)-binding residues include Asp-32, Asn-34, Asp-36, Lys-38, Glu-43, Asp-68, Asn-70, Asp-72, His-74, Glu-79, Asp-99, Asn-101, Asp-103, Lys-105, Glu-110, Asp-135, Asp-137, Thr-139, Thr-141, and Glu-146. The segment at 159 to 168 (IQQIIRYWKH) is linker region. The interval 174 to 473 (IGDSLTIPDE…YEKMKVQLGI (300 aa)) is C-terminal transmembrane transporter domain. Solcar repeat units follow at residues 192-277 (GQWW…YKKL), 285-370 (LGTA…LKNY), and 382-470 (PGVL…MKVQ). A helical membrane pass occupies residues 198 to 215 (LMAGGMAGAVSRTGTAPL). The Mitochondrial matrix portion of the chain corresponds to 216-251 (DRLKVMMQVHGSKGNSNIITGLKQMVKEGGIRSLWR). The chain crosses the membrane as a helical span at residues 252–271 (GNGVNVIKIAPETAMKFWAY). Topologically, residues 272–294 (EQYKKLFTSESGKLGTAERFVAG) are mitochondrial intermembrane. A helical transmembrane segment spans residues 295 to 308 (SLAGATAQTSIYPM). The Mitochondrial matrix portion of the chain corresponds to 309-344 (EVLKTRLAVGRTGQYSGMFDCAKKIMQKEGIRAFYK). The helical transmembrane segment at 345-364 (GYIPNILGIIPYAGIDLAIY) threads the bilayer. Residues 365 to 387 (ETLKNYWLQNHAKDSANPGVLVL) lie on the Mitochondrial intermembrane side of the membrane. Residues 388 to 405 (LGCGTASSTCGQLASYPL) traverse the membrane as a helical segment. The Mitochondrial matrix segment spans residues 406–444 (ALIRTRMQAQASIEGAPQLNMGGLFRKIVAKEGFLGLYR). The helical transmembrane segment at 445 to 464 (GIGPNFLKVLPAVSISYVVY) threads the bilayer. The Mitochondrial intermembrane segment spans residues 465–473 (EKMKVQLGI).

Belongs to the mitochondrial carrier (TC 2.A.29) family. Monomer.

It is found in the mitochondrion inner membrane. It carries out the reaction Mg(2+)(out) + phosphate(in) + ATP(out) = Mg(2+)(in) + phosphate(out) + ATP(in). The catalysed reaction is ADP(out) + phosphate(in) + H(+)(out) = ADP(in) + phosphate(out) + H(+)(in). The enzyme catalyses AMP(out) + phosphate(in) = AMP(in) + phosphate(out). It catalyses the reaction phosphate(in) + ATP(out) + 2 H(+)(out) = phosphate(out) + ATP(in) + 2 H(+)(in). It carries out the reaction dADP(in) + ADP(out) = dADP(out) + ADP(in). The catalysed reaction is Mg(2+)(in) + ADP(out) + ATP(in) + H(+)(out) = Mg(2+)(out) + ADP(in) + ATP(out) + H(+)(in). The enzyme catalyses ADP(out) + diphosphate(in) = ADP(in) + diphosphate(out). It catalyses the reaction dAMP(in) + ADP(out) + H(+)(out) = dAMP(out) + ADP(in) + H(+)(in). It carries out the reaction 3'-AMP(in) + ADP(out) + H(+)(out) = 3'-AMP(out) + ADP(in) + H(+)(in). The catalysed reaction is dAMP(out) + phosphate(in) = dAMP(in) + phosphate(out). The enzyme catalyses 3'-AMP(out) + phosphate(in) = 3'-AMP(in) + phosphate(out). It catalyses the reaction dADP(out) + phosphate(in) + H(+)(out) = dADP(in) + phosphate(out) + H(+)(in). Activated by an increase in cytosolic calcium levels that induce a conformational change of the N-terminal regulatory domain, uncapping the channel and allowing transport. Inhibited by bathophenanthroline, mersalyl, p-hydroxymercuribenzoate, bromcresol purple and tannic acid. Electroneutral antiporter that mediates the transport of adenyl nucleotides through the inner mitochondrial membrane. Originally identified as an ATP-magnesium/inorganic phosphate antiporter, it also acts as a broad specificity adenyl nucleotide antiporter. By regulating the mitochondrial matrix adenyl nucleotide pool could adapt to changing cellular energetic demands and indirectly regulate adenyl nucleotide-dependent metabolic pathways. This is Mitochondrial adenyl nucleotide antiporter SLC25A24-B (slc25a24-b) from Xenopus laevis (African clawed frog).